Consider the following 497-residue polypeptide: uncharacterized protein (497 aa).

Residues 474 to 497 form a disordered region; it reads DPRNPFSNGKPSGWSDEDVAWLKR. Over residues 488 to 497 the composition is skewed to acidic residues; that stretch reads SDEDVAWLKR.

This is an uncharacterized protein from Bacillus anthracis.